We begin with the raw amino-acid sequence, 435 residues long: D-inositol 3-phosphate glycosyltransferase (435 aa).

His25 provides a ligand contact to 1D-myo-inositol 3-phosphate. Residues 31–32 (QP) and Gly39 each bind UDP-N-acetyl-alpha-D-glucosamine. 1D-myo-inositol 3-phosphate contacts are provided by residues 36–41 (DAGGMN), Lys94, Tyr127, Thr151, and Arg171. UDP-N-acetyl-alpha-D-glucosamine is bound by residues Arg245 and Lys250. Residues Tyr320, Arg321, and Ala323 each contribute to the Mg(2+) site. Residues Glu333 and Glu341 each contribute to the UDP-N-acetyl-alpha-D-glucosamine site. Mg(2+) is bound at residue Thr347.

The protein belongs to the glycosyltransferase group 1 family. MshA subfamily. Homodimer.

It catalyses the reaction 1D-myo-inositol 3-phosphate + UDP-N-acetyl-alpha-D-glucosamine = 1D-myo-inositol 2-acetamido-2-deoxy-alpha-D-glucopyranoside 3-phosphate + UDP + H(+). In terms of biological role, catalyzes the transfer of a N-acetyl-glucosamine moiety to 1D-myo-inositol 3-phosphate to produce 1D-myo-inositol 2-acetamido-2-deoxy-glucopyranoside 3-phosphate in the mycothiol biosynthesis pathway. This Streptosporangium roseum (strain ATCC 12428 / DSM 43021 / JCM 3005 / KCTC 9067 / NCIMB 10171 / NRRL 2505 / NI 9100) protein is D-inositol 3-phosphate glycosyltransferase.